A 408-amino-acid chain; its full sequence is 3-phosphoshikimate 1-carboxyvinyltransferase (408 aa).

3 residues coordinate 3-phosphoshikimate: K20, S21, and R25. Phosphoenolpyruvate is bound at residue K20. Phosphoenolpyruvate is bound at residue R111. S151, S152, Q153, S178, D293, and K320 together coordinate 3-phosphoshikimate. Phosphoenolpyruvate is bound at residue Q153. The active-site Proton acceptor is the D293. Phosphoenolpyruvate contacts are provided by R324, R365, and K389.

Belongs to the EPSP synthase family. Monomer.

The protein localises to the cytoplasm. The enzyme catalyses 3-phosphoshikimate + phosphoenolpyruvate = 5-O-(1-carboxyvinyl)-3-phosphoshikimate + phosphate. It participates in metabolic intermediate biosynthesis; chorismate biosynthesis. Its function is as follows. Catalyzes the transfer of the enolpyruvyl moiety of phosphoenolpyruvate (PEP) to the 5-hydroxyl of shikimate-3-phosphate (S3P) to produce enolpyruvyl shikimate-3-phosphate and inorganic phosphate. This is 3-phosphoshikimate 1-carboxyvinyltransferase from Sulfurisphaera tokodaii (strain DSM 16993 / JCM 10545 / NBRC 100140 / 7) (Sulfolobus tokodaii).